The primary structure comprises 602 residues: DNA damage-binding protein CMR1 (602 aa).

The segment at 35–85 (KEVDNKSFSSPSSQKRRKTTKKPVIKKEISEPSRRSRRIAGIKSELEDPKQ) is disordered. Over residues 48 to 58 (QKRRKTTKKPV) the composition is skewed to basic residues. A compositionally biased stretch (basic and acidic residues) spans 59 to 68 (IKKEISEPSR). WD repeat units follow at residues 229–270 (ICHN…NDTK), 291–328 (RNVS…STEL), 390–430 (LHDK…KSVY), 446–484 (NSRL…KLDN), 526–569 (GRWV…LAHL), and 571–602 (EQVG…YLFE).

This sequence belongs to the WD repeat DDB2/WDR76 family.

Functionally, DNA-binding protein that binds to both single- and double-stranded DNA. Binds preferentially to UV-damaged DNA. May be involved in DNA-metabolic processes. The polypeptide is DNA damage-binding protein CMR1 (Candida albicans (strain SC5314 / ATCC MYA-2876) (Yeast)).